A 331-amino-acid polypeptide reads, in one-letter code: Protein RecA (331 aa).

Position 66 to 73 (66 to 73) interacts with ATP; that stretch reads GPESSGKT.

Belongs to the RecA family.

The protein localises to the cytoplasm. Functionally, can catalyze the hydrolysis of ATP in the presence of single-stranded DNA, the ATP-dependent uptake of single-stranded DNA by duplex DNA, and the ATP-dependent hybridization of homologous single-stranded DNAs. It interacts with LexA causing its activation and leading to its autocatalytic cleavage. This chain is Protein RecA, found in Acholeplasma laidlawii.